Here is a 954-residue protein sequence, read N- to C-terminus: Xylanolytic transcriptional activator xlnR (954 aa).

2 disordered regions span residues 1–39 and 51–93; these read MSTTSLQHFPHSYSPFSSSRSLNRMAQSQTSGLDTLAEG and REAA…SQRD. The segment covering 8–21 has biased composition (low complexity); the sequence is HFPHSYSPFSSSRS. Residues 22–33 are compositionally biased toward polar residues; sequence LNRMAQSQTSGL. Positions 64–78 are enriched in basic and acidic residues; sequence GKPKDQFQVDNDNHH. Residues 82 to 91 are compositionally biased toward polar residues; it reads SLSNFKNPSQ. The zn(2)-C6 fungal-type DNA-binding region spans 119-145; sequence CDQCNQLRTKCDGQNPCAHCIDFGLTC. Disordered stretches follow at residues 173–226, 310–333, 566–607, and 758–777; these read ATNS…HSEA, LMNPQEPNSTSISHFRLGSSTENP, ELPP…PGNT, and MDGSHPNHVSPSGRSSSTVE. Positions 174–183 are enriched in polar residues; sequence TNSGQPNGSS. The span at 574 to 590 shows a compositional bias: basic and acidic residues; sequence ARPDAERDGDPDADLSK. The span at 764-777 shows a compositional bias: polar residues; it reads NHVSPSGRSSSTVE.

The protein belongs to the xlnR/xlr1 family.

The protein resides in the nucleus. Functionally, transcriptional activator of the xylanolytic system. Involved in the regulation of extracellular cellulolytic and xylanolytic genes and in the regulation of the intracellular activities of D-xylose catabolic genes in the pentose catabolic pathway (PCP) in response to the presence of D-xylose. This Aspergillus fumigatus (strain ATCC MYA-4609 / CBS 101355 / FGSC A1100 / Af293) (Neosartorya fumigata) protein is Xylanolytic transcriptional activator xlnR (xlnR).